A 556-amino-acid polypeptide reads, in one-letter code: MDFRSLIASSVAQDKDREFEVRPSSRGSWSCKEVDEFDALSIEYEPKPIEKYPAKLHARQVKKYLGLQEGLIYLPGLPSFNYEDSDMQPAFRQRRYFYYLTGVNFPDCIVTYSIHRDQLWLWIPPPNSGRSVIYNGSRPTAKEIMAKYDLDHVETLPHLDSYLTWYAHTEPGKIHVLHDYQTPNNVELQITRKNGSQSIMSESPFDSTKLEEAMNTARAIKSPYELKMIRKASAITAQGHINVLRGLRYLSNEAEIEAIFTATCIARQAKTQAYGVIAGSGENASTLHYMANNEPLKGRQLLCLDAGCEWDCYASDVTRTVPISGEYTEEAQAIYDLVAKMQDECIEMLKPGANYRDVHMHAHKVALRGLMELGLVEGGTFNELYMAGVSVAFFPHGLGHYVGLEVHDVGPGGMIITNRLFDFNRKPADWTDAYFQILSDSGINSGGGAILSKDMVVTVEPGIYFSRYALEEVYLKSPKYAKYINKELLQKYYPVGGVRIEDDLLITEDGYENLTTAPKGEAALKIINEGREQEEKRVVCEKAAESKRKQKKTWFW.

Positions 305, 316, 460, and 501 each coordinate Mn(2+).

The protein belongs to the peptidase M24B family. Requires Mn(2+) as cofactor.

The catalysed reaction is Release of any N-terminal amino acid, including proline, that is linked to proline, even from a dipeptide or tripeptide.. Functionally, catalyzes the removal of a penultimate prolyl residue from the N-termini of peptides. This Sclerotinia sclerotiorum (strain ATCC 18683 / 1980 / Ss-1) (White mold) protein is Probable Xaa-Pro aminopeptidase SS1G_06948.